Consider the following 620-residue polypeptide: Glutathione-regulated potassium-efflux system protein KefC (620 aa).

The Periplasmic portion of the chain corresponds to 1–3 (MDS). The helical transmembrane segment at 4 to 24 (HTLVQALIYLGSAALIVPIAV) threads the bilayer. Position 25 (Arg25) is a topological domain, cytoplasmic. The helical transmembrane segment at 26–46 (LGLGSVLGYLIAGCIIGPWGL) threads the bilayer. The Periplasmic portion of the chain corresponds to 47–53 (RLVTDAE). A helical transmembrane segment spans residues 54–74 (SILHFAEIGVVLMLFIIGLEL). The Cytoplasmic segment spans residues 75 to 89 (DPQRLWKLRAAVFGG). Residues 90-110 (GALQMVICGGLLGLFCMLLGL) traverse the membrane as a helical segment. At 111 to 113 (RWQ) the chain is on the periplasmic side. Residues 114–134 (VAELIGMTLALSSTAIAMQAM) traverse the membrane as a helical segment. Over 135–148 (NERNLMVTQMGRSA) the chain is Cytoplasmic. A helical membrane pass occupies residues 149 to 169 (FAVLLFQDIAAIPLVAMIPLL). The Periplasmic segment spans residues 170–177 (AASSASTT). The chain crosses the membrane as a helical span at residues 178-198 (MGAFALSALKVAGALVLVVLL). Over 199-213 (GRYVTRPALRFVARS) the chain is Cytoplasmic. A helical membrane pass occupies residues 214-233 (GLREVFSAVALFLVFGFGLL). At 234–236 (LEE) the chain is on the periplasmic side. Residues 237 to 254 (VGLSMAMGAFLAGVLLAS) traverse the membrane as a helical segment. The Cytoplasmic segment spans residues 255 to 269 (SEYRHALESDIEPFK). Residues 270–290 (GLLLGLFFIGVGMSIDFGTLI) form a helical membrane-spanning segment. The Periplasmic portion of the chain corresponds to 291–293 (ENP). A helical transmembrane segment spans residues 294 to 314 (LRIVILLLGFLIIKIAMLWLI). At 315–326 (ARPLQVPNKQRR) the chain is on the cytoplasmic side. A helical transmembrane segment spans residues 327 to 347 (WFAVLLGQGSEFAFVVFGAAQ). Residues 348–358 (MANVLEPEWAK) lie on the Periplasmic side of the membrane. A helical membrane pass occupies residues 359–379 (SLTLAVALSMAATPILLVILN). Topologically, residues 380 to 620 (RLEQSSTEEA…ADEPETKPSS (241 aa)) are cytoplasmic. The region spanning 399–518 (QPRVIIAGFG…AGVEKPERET (120 aa)) is the RCK N-terminal domain. Positions 597–620 (GWQGTEEGKHTGNMADEPETKPSS) are disordered.

Belongs to the monovalent cation:proton antiporter 2 (CPA2) transporter (TC 2.A.37) family. KefC subfamily. Homodimer. Interacts with the regulatory subunit KefF.

The protein localises to the cell inner membrane. In terms of biological role, pore-forming subunit of a potassium efflux system that confers protection against electrophiles. Catalyzes K(+)/H(+) antiport. In Escherichia coli O157:H7, this protein is Glutathione-regulated potassium-efflux system protein KefC.